The sequence spans 513 residues: Putative ATP-dependent RNA helicase QP509L (513 aa).

In terms of domain architecture, Helicase ATP-binding spans 110 to 262 (KKLLSPYGRF…KIIIHHLGQP (153 aa)). ATP is bound at residue 123–130 (LNTGLGKT). The DEAH box motif lies at 215–218 (DEAH).

Belongs to the DEAD box helicase family. DEAH subfamily.

It carries out the reaction ATP + H2O = ADP + phosphate + H(+). In African swine fever virus (isolate Tick/South Africa/Pretoriuskop Pr4/1996) (ASFV), this protein is Putative ATP-dependent RNA helicase QP509L.